Reading from the N-terminus, the 313-residue chain is Hydroxyphenylpyruvate reductase (313 aa).

NADP(+)-binding positions include 152–155 (LGRI), 174–176 (SRS), and Ile230. Arg232 is a catalytic residue. Asp256 is an NADP(+) binding site. The active site involves Glu261. His279 acts as the Proton donor in catalysis.

Belongs to the D-isomer specific 2-hydroxyacid dehydrogenase family.

It carries out the reaction (2R)-2-hydroxy-3-(4-hydroxyphenyl)propanoate + NAD(+) = 3-(4-hydroxyphenyl)pyruvate + NADH + H(+). It catalyses the reaction (2R)-2-hydroxy-3-(4-hydroxyphenyl)propanoate + NADP(+) = 3-(4-hydroxyphenyl)pyruvate + NADPH + H(+). The enzyme catalyses (2R)-3-(3,4-dihydroxyphenyl)lactate + NADP(+) = 3-(3,4-dihydroxyphenyl)pyruvate + NADPH + H(+). The catalysed reaction is (2R)-3-(3,4-dihydroxyphenyl)lactate + NAD(+) = 3-(3,4-dihydroxyphenyl)pyruvate + NADH + H(+). Functionally, catalyzes the NAD(P)H-dependent reduction of 4-hydroxyphenylpyruvate to 4-hydroxyphenyllactate and 3,4-dihydroxyphenylpyruvate to 3,4-dihydroxyphenyllactate in the biosynthesis of rosmarinic acid. Rosmarinic acid is an ester of caffeic acid and 3,4-dihydroxyphenyllactic acid. NADP is the preferred substrate. In Plectranthus scutellarioides (Coleus), this protein is Hydroxyphenylpyruvate reductase (HPPR).